Consider the following 206-residue polypeptide: Imidazole glycerol phosphate synthase subunit HisH (206 aa).

The Glutamine amidotransferase type-1 domain occupies 1 to 206 (MIVIIDYGMG…LRILKNFGDM (206 aa)). The active-site Nucleophile is cysteine 79. Residues histidine 188 and glutamate 190 contribute to the active site.

In terms of assembly, heterodimer of HisH and HisF.

The protein localises to the cytoplasm. The enzyme catalyses 5-[(5-phospho-1-deoxy-D-ribulos-1-ylimino)methylamino]-1-(5-phospho-beta-D-ribosyl)imidazole-4-carboxamide + L-glutamine = D-erythro-1-(imidazol-4-yl)glycerol 3-phosphate + 5-amino-1-(5-phospho-beta-D-ribosyl)imidazole-4-carboxamide + L-glutamate + H(+). It catalyses the reaction L-glutamine + H2O = L-glutamate + NH4(+). It participates in amino-acid biosynthesis; L-histidine biosynthesis; L-histidine from 5-phospho-alpha-D-ribose 1-diphosphate: step 5/9. Its function is as follows. IGPS catalyzes the conversion of PRFAR and glutamine to IGP, AICAR and glutamate. The HisH subunit catalyzes the hydrolysis of glutamine to glutamate and ammonia as part of the synthesis of IGP and AICAR. The resulting ammonia molecule is channeled to the active site of HisF. This is Imidazole glycerol phosphate synthase subunit HisH from Syntrophotalea carbinolica (strain DSM 2380 / NBRC 103641 / GraBd1) (Pelobacter carbinolicus).